The primary structure comprises 542 residues: MESQAADYNPASRNLHGSSGEMKLRRRKSRQYVSAQEKRSPRRGLLGENTYLVLFTIALRILNCFLVQTSFVPDEYWQSLEVAHRMVFSYGYLTWEWTERLRGYTYPLIFASIYKVLHLLGKDSVQFLIWIPRLGQALLSAVADIRLYSLLKQLENQEVAQWVFLCQLCSWFTWYCCTRTLTNTMETSLTALALFYYPLEGSRSVNSVKYSLLVALACVVRPTALIPWVPLLFRHFYQEQRKLHLTLHHFLPVGFITFSLSLIIDRIFFGQWTLVQLNFLKFNVLQNLGTFYGSHPWHWYLSQGFPVVLGTHLPFFIHGCFLAPRRLHILLLTVLWTLLVYSMLGHKEFRFIYPVLPFCMVFCGYSLAHLKTWRKAALSFLLLSNVPLAFYTGLVHQRGTLDVMNHIQKVCPRGPDPASASVFIMMPCHSTPYYSHVHCPLSMRFLQCPPDLTGKTQYLDEADMFYLNPLRWLQQEFHSNASLPTHLVTFNVLEKEINTFLTSGNYERAATFFHTHWPERRTGSHIHVYERRLPGRVNTGGN.

The interval 1 to 36 (MESQAADYNPASRNLHGSSGEMKLRRRKSRQYVSAQ) is disordered. 8 helical membrane-spanning segments follow: residues 52 to 72 (LVLF…TSFV), 125 to 145 (VQFL…VADI), 213 to 233 (LVAL…PLLF), 244 to 264 (HLTL…SLII), 304 to 324 (GFPV…FLAP), 327 to 347 (LHIL…LGHK), 351 to 371 (FIYP…AHLK), and 376 to 396 (AALS…GLVH). N-linked (GlcNAc...) asparagine glycosylation occurs at Asn-480.

Belongs to the glycosyltransferase 22 family. PIGB subfamily.

It localises to the endoplasmic reticulum membrane. Its pathway is glycolipid biosynthesis; glycosylphosphatidylinositol-anchor biosynthesis. Alpha-1,2-mannosyltransferase that catalyzes the transfer of the third mannose, via an alpha-1,2 bond, from a dolichol-phosphate-mannose (Dol-P-Man) to an alpha-D-Man-(1-&gt;6)-2-PEtn-alpha-D-Man-(1-&gt;4)-alpha-D-GlcN-(1-&gt;6)-(1-radyl,2-acyl-sn-glycero-3-phospho)-2-acyl-inositol intermediate to generate an alpha-D-Man-(1-&gt;2)-alpha-D-Man-(1-&gt;6)-2-PEtn-alpha-D-Man-(1-&gt;4)-alpha-D-GlcN-(1-&gt;6)-(1-radyl,2-acyl-sn-glycero-3-phospho)-2-acyl-inositol (also termed H6) and participates in the nineth step of the glycosylphosphatidylinositol-anchor biosynthesis. May also add the third mannose to an alpha-D-Man-(1-&gt;6)-alpha-D-Man-(1-&gt;4)-alpha-D-GlcN-(1-&gt;6)-(1-radyl,2-acyl-sn-glycero-3-phospho)-2-acyl-inositol (also termed H3) intermediate generating an alpha-D-Man-(1-&gt;2)-alpha-D-Man-(1-&gt;6)-alpha-D-Man-(1-&gt;4)-alpha-D-GlcN-(1-&gt;6)-(1-radyl,2-acyl-sn-glycero-3-phospho)-2-acyl-inositol (also termed H4). In Mus musculus (Mouse), this protein is GPI alpha-1,2-mannosyltransferase 3.